The primary structure comprises 349 residues: DENN domain-containing protein 10 (349 aa).

Residues 1–135 (MATPELMLSL…TKGICQSDEN (135 aa)) enclose the uDENN domain. One can recognise a cDENN domain in the interval 160-294 (QFGMETIILY…ADRSDAQVIK (135 aa)). The dDENN domain occupies 296–349 (ISVKTKEILSNLMSLADHADNSKLTLECLKQGHYPPATENFLFHLAAAEQLLKI).

This sequence belongs to the DENND10 family.

The protein localises to the late endosome. Guanine nucleotide exchange factor (GEF) which may be involved in the regulation of late endocytic pathway homeostasis, including endosomal positioning, maturation and secretion. In Danio rerio (Zebrafish), this protein is DENN domain-containing protein 10 (dennd10).